The following is an 88-amino-acid chain: MGIARILSAVLFLSVLFVVTFPTLLSADHHDGRIDTCRLPSDRGRCKASFERWYFNGTTCAKFVYGGYGGNDNRFPTEKACMKRCAKA.

The N-terminal stretch at 1–27 (MGIARILSAVLFLSVLFVVTFPTLLSA) is a signal peptide. Residues 28-33 (DHHDGR) constitute a propeptide that is removed on maturation. One can recognise a BPTI/Kunitz inhibitor domain in the interval 37–85 (CRLPSDRGRCKASFERWYFNGTTCAKFVYGGYGGNDNRFPTEKACMKRC). Cystine bridges form between Cys37-Cys85 and Cys60-Cys81.

The protein belongs to the venom Kunitz-type family. 01 (intermediate) subfamily. Expressed by the venom gland.

The protein localises to the secreted. Its function is as follows. Serine protease inhibitor that inhibits trypsin at a molar ratio of 1:1. This is Kunitz-type U15-theraphotoxin-Hhn1m from Cyriopagopus hainanus (Chinese bird spider).